The primary structure comprises 238 residues: Ribitol-5-phosphate cytidylyltransferase (238 aa).

CTP-binding positions include leucine 7–glycine 10 and glycine 81–serine 87.

The protein belongs to the IspD/TarI cytidylyltransferase family. TarI subfamily.

It catalyses the reaction D-ribitol 5-phosphate + CTP + H(+) = CDP-L-ribitol + diphosphate. The protein operates within cell wall biogenesis; poly(ribitol phosphate) teichoic acid biosynthesis. Functionally, catalyzes the transfer of the cytidylyl group of CTP to D-ribitol 5-phosphate. The sequence is that of Ribitol-5-phosphate cytidylyltransferase from Staphylococcus epidermidis (strain ATCC 12228 / FDA PCI 1200).